The following is a 181-amino-acid chain: CASP-like protein 5A1 (181 aa).

Topologically, residues 1–38 (MFASRPVVHPLEVAAPAHPVQQPAPGVLMKDLPGMPGT) are cytoplasmic. A helical membrane pass occupies residues 39–59 (PGGLGLRVLQLLFAAISLAVM). The Extracellular portion of the chain corresponds to 60–77 (SSTADFASVSAFCYLITT). Residues 78-98 (TVLQCVWSLTVAIVDIYALLV) traverse the membrane as a helical segment. The Cytoplasmic portion of the chain corresponds to 99 to 115 (KRCLQNRRAVTLFSIGD). Residues 116–136 (GITWLVSFSGACAAAGIPVLI) traverse the membrane as a helical segment. Topologically, residues 137–153 (DADLIMCSENPCASFQT) are extracellular. Residues 154 to 174 (AVAMGFMCCFSLLPSFLLNFY) form a helical membrane-spanning segment. Residues 175 to 181 (SIASSHG) are Cytoplasmic-facing.

The protein belongs to the Casparian strip membrane proteins (CASP) family. In terms of assembly, homodimer and heterodimers.

It is found in the cell membrane. This is CASP-like protein 5A1 from Zea mays (Maize).